Here is a 180-residue protein sequence, read N- to C-terminus: Translation initiation factor IF-3 (180 aa).

It belongs to the IF-3 family. In terms of assembly, monomer.

It is found in the cytoplasm. IF-3 binds to the 30S ribosomal subunit and shifts the equilibrium between 70S ribosomes and their 50S and 30S subunits in favor of the free subunits, thus enhancing the availability of 30S subunits on which protein synthesis initiation begins. The chain is Translation initiation factor IF-3 from Caldanaerobacter subterraneus subsp. tengcongensis (strain DSM 15242 / JCM 11007 / NBRC 100824 / MB4) (Thermoanaerobacter tengcongensis).